A 157-amino-acid polypeptide reads, in one-letter code: UPF0303 protein NT01EI_1570 (157 aa).

The protein belongs to the UPF0303 family.

This chain is UPF0303 protein NT01EI_1570, found in Edwardsiella ictaluri (strain 93-146).